The chain runs to 124 residues: Holo-[acyl-carrier-protein] synthase (124 aa).

Residues D8 and E56 each contribute to the Mg(2+) site.

It belongs to the P-Pant transferase superfamily. AcpS family. Mg(2+) is required as a cofactor.

It is found in the cytoplasm. It carries out the reaction apo-[ACP] + CoA = holo-[ACP] + adenosine 3',5'-bisphosphate + H(+). Its function is as follows. Transfers the 4'-phosphopantetheine moiety from coenzyme A to a Ser of acyl-carrier-protein. The protein is Holo-[acyl-carrier-protein] synthase of Nitratidesulfovibrio vulgaris (strain DP4) (Desulfovibrio vulgaris).